The primary structure comprises 619 residues: MPSYRSRTTTHGRNMAGARGLWRATGMKDSDFGKPIIAVVNSFTQFVPGHVHLKDLGQMVAREIEAAGGVAKEFNTIAVDDGIAMGHDGMLYSLPSRDLIADSVEYMVNAHCADAMVCISNCDKITPGMLMAALRINIPVVFVSGGPMEAGKVVLKGKEVALDLVDAMVAAADEKYSDEEVLAIEQAACPTCGSCSGMFTANSMNCLTEALGLSLPGNGSTLATHADRKELFLRAGRIVVEMCRRHYEEGDDSVLPRNIATFEAFENAMSLDIAMGGSTNTVLHLLAAAHEAGVDFTMEDIDRLSRRVPCLSKVAPAKSDVHMEDVHRAGGIMAILGELDRAGLLHAHLPTVHSATLGDALNKWDIARTNDPEVQKFFMAAPGGVPTQTAFSQARRWDSLDLDRISGVIRSADHAFSKDGGLAVLSGNVAPDGCIVKTAGVDESILKFSGPAKVFESQDAAVAGILTGQVEAGDVVVIRYEGPKGGPGMQEMLYPTSYLKSKGLGAACALVTDGRFSGGTSGLSIGHVSPEAAEGGTIGLVENGDLINIDIPSRTITLAVADSVLAERRAAMEAKGDAAWQPAKPRPRKVSVALQAYAAMTTSAARGAVRDLSQLKGKG.

A Mg(2+)-binding site is contributed by Asp81. Cys122 is a [2Fe-2S] cluster binding site. Residues Asp123 and Lys124 each contribute to the Mg(2+) site. Lys124 carries the N6-carboxylysine modification. Cys195 contributes to the [2Fe-2S] cluster binding site. Glu491 is a Mg(2+) binding site. The active-site Proton acceptor is Ser517.

The protein belongs to the IlvD/Edd family. Homodimer. It depends on [2Fe-2S] cluster as a cofactor. Mg(2+) serves as cofactor.

It catalyses the reaction (2R)-2,3-dihydroxy-3-methylbutanoate = 3-methyl-2-oxobutanoate + H2O. It carries out the reaction (2R,3R)-2,3-dihydroxy-3-methylpentanoate = (S)-3-methyl-2-oxopentanoate + H2O. It functions in the pathway amino-acid biosynthesis; L-isoleucine biosynthesis; L-isoleucine from 2-oxobutanoate: step 3/4. Its pathway is amino-acid biosynthesis; L-valine biosynthesis; L-valine from pyruvate: step 3/4. In terms of biological role, functions in the biosynthesis of branched-chain amino acids. Catalyzes the dehydration of (2R,3R)-2,3-dihydroxy-3-methylpentanoate (2,3-dihydroxy-3-methylvalerate) into 2-oxo-3-methylpentanoate (2-oxo-3-methylvalerate) and of (2R)-2,3-dihydroxy-3-methylbutanoate (2,3-dihydroxyisovalerate) into 2-oxo-3-methylbutanoate (2-oxoisovalerate), the penultimate precursor to L-isoleucine and L-valine, respectively. This is Dihydroxy-acid dehydratase from Sphingopyxis alaskensis (strain DSM 13593 / LMG 18877 / RB2256) (Sphingomonas alaskensis).